Reading from the N-terminus, the 500-residue chain is Protein nucleotidyltransferase YdiU (500 aa).

Residues Gly-96, Gly-98, Arg-99, Lys-119, Asp-131, Gly-132, Arg-182, and Arg-189 each coordinate ATP. Asp-258 acts as the Proton acceptor in catalysis. Residues Asn-259 and Asp-268 each contribute to the Mg(2+) site. Position 268 (Asp-268) interacts with ATP.

Belongs to the SELO family. Mg(2+) serves as cofactor. It depends on Mn(2+) as a cofactor.

The catalysed reaction is L-seryl-[protein] + ATP = 3-O-(5'-adenylyl)-L-seryl-[protein] + diphosphate. It carries out the reaction L-threonyl-[protein] + ATP = 3-O-(5'-adenylyl)-L-threonyl-[protein] + diphosphate. The enzyme catalyses L-tyrosyl-[protein] + ATP = O-(5'-adenylyl)-L-tyrosyl-[protein] + diphosphate. It catalyses the reaction L-histidyl-[protein] + UTP = N(tele)-(5'-uridylyl)-L-histidyl-[protein] + diphosphate. The catalysed reaction is L-seryl-[protein] + UTP = O-(5'-uridylyl)-L-seryl-[protein] + diphosphate. It carries out the reaction L-tyrosyl-[protein] + UTP = O-(5'-uridylyl)-L-tyrosyl-[protein] + diphosphate. In terms of biological role, nucleotidyltransferase involved in the post-translational modification of proteins. It can catalyze the addition of adenosine monophosphate (AMP) or uridine monophosphate (UMP) to a protein, resulting in modifications known as AMPylation and UMPylation. This Rhizobium johnstonii (strain DSM 114642 / LMG 32736 / 3841) (Rhizobium leguminosarum bv. viciae) protein is Protein nucleotidyltransferase YdiU.